A 1356-amino-acid chain; its full sequence is Partitioning defective 3 homolog (1356 aa).

Phosphoserine is present on S25. Disordered regions lie at residues 81 to 100 (EQDP…GTQS) and 154 to 262 (SVSD…GLEH). Position 91 is a phosphothreonine (T91). Positions 91 to 100 (TSASSTGTQS) are enriched in low complexity. Polar residues-rich tracts occupy residues 154–163 (SVSDSNFSSE) and 171–187 (TRWS…TAGS). S156 and S174 each carry phosphoserine. Residues 190-203 (TCDRKKDENYRSLP) show a composition bias toward basic and acidic residues. Residues 204-224 (RDTSNWSNQFQRDNARSSLSA) are compositionally biased toward polar residues. Residues 246–260 (DNSRVEPVGHADTGL) are compositionally biased toward basic and acidic residues. Positions 271 to 359 (MVKLVEVPND…TPIIWFHVVP (89 aa)) constitute a PDZ 1 domain. The residue at position 383 (S383) is a Phosphoserine. A disordered region spans residues 408 to 448 (LNHPPEQIDSHSRLPHSAHPSGKPPSAPASAPQNVFSTTVS). PDZ domains lie at 461–546 (NIQL…LVFR) and 590–677 (EVPL…GMIQ). Residue Y489 is modified to Phosphotyrosine. 7 positions are modified to phosphoserine: S692, S695, S715, S728, A792, S809, and S827. The tract at residues 712 to 936 (RRISHSLYSG…AAIDKSYDKP (225 aa)) is interaction with PRKCI and PRKCZ. K834 carries the N6-acetyllysine modification. At S837 the chain carries Phosphoserine. K851 is subject to N6-acetyllysine. 2 positions are modified to phosphoserine: S852 and S873. Disordered stretches follow at residues 865–886 (TVDD…GLKK) and 932–1025 (SYDK…DMFR). K885 bears the N6-acetyllysine mark. Residues 935–1356 (KPAVDDDDEG…TPEKGRPFYS (422 aa)) form an interaction with FRMD4A region. Positions 939–953 (DDDDEGMETLEEDTE) are enriched in acidic residues. S962 bears the Phosphoserine; by AURKA mark. Positions 968–982 (DQPSHSLERQMNGNQ) are enriched in polar residues. A phosphoserine mark is found at S971 and S973. The span at 983-1009 (EKGDKTDRKKDKTGKEKKKDRDKEKDK) shows a compositional bias: basic and acidic residues. S1046 carries the post-translational modification Phosphoserine. A coiled-coil region spans residues 1049–1077 (SEEERIRMKQEQERIQAKTREFRERQARE). The tract at residues 1129 to 1356 (QVKKPRNSKP…TPEKGRPFYS (228 aa)) is disordered. The span at 1136–1149 (SKPSPVDSNRSTPS) shows a compositional bias: polar residues. The span at 1150-1177 (NHDRIQRLRQEFQQAKQDEDVEDRRRTY) shows a compositional bias: basic and acidic residues. 3 coiled-coil regions span residues 1151-1174 (HDRI…EDRR), 1201-1224 (VQMQ…YSSL), and 1280-1301 (MLET…MKKQ). Positions 1196-1205 (SVSVEVQMQR) are enriched in low complexity. A compositionally biased stretch (polar residues) spans 1221-1245 (YSSLPRQSRKNASSVSQDSWEQNYS). Residues 1285–1298 (ELLRQEQRRKEQQM) show a composition bias toward basic and acidic residues. Polar residues predominate over residues 1337 to 1346 (SQVARLNRLQ). Basic and acidic residues predominate over residues 1347-1356 (TPEKGRPFYS). Residue K1350 is modified to N6-acetyllysine.

It belongs to the PAR3 family. As to quaternary structure, interacts (via PDZ 1 domain) with F11R/JAM1, PARD6A and PARD6B. Interacts with PRCKI and CDH5. Interacts (via PDZ 3 domain) with PTEN (via C-terminus). Part of a complex with PARD6A or PARD6B, PRKCI or PRKCZ and CDC42 or RAC1. Component of a complex whose core is composed of ARHGAP17, AMOT, PALS1, PATJ and PARD3/PAR3. Interacts with LIMK2, AURKA and AURKB. Component of the Par polarity complex, composed of at least phosphorylated PRKCZ, PARD3 and TIAM1. Directly interacts with TIAM1 and TIAM2. Interacts with ECT2, FBF1 and SIRT2. Interacts (via coiled-coil domain) with FRMD4A. Found in a complex with PARD3, CYTH1 and FRMD4A. Interacts with SAPCD2. Interacts with PRKCA. Interacts with PRKCZ. Acetylated. Deacetylated by SIRT2, thereby inhibiting Schwann cell peripheral myelination. Post-translationally, phosphorylation at Ser-827 by PRKCZ and PRKCI occurs at the most apical tip of epithelial cell-cell contacts during the initial phase of tight junction formation and may promote dissociation of the complex with PARD6. EGF-induced Tyr-1127 phosphorylation mediates dissociation from LIMK2. Phosphorylation by AURKA at Ser-962 is required for the normal establishment of neuronal polarity. In terms of tissue distribution, widely expressed.

The protein localises to the cytoplasm. The protein resides in the endomembrane system. It is found in the cell junction. It localises to the tight junction. Its subcellular location is the adherens junction. The protein localises to the cell membrane. The protein resides in the cell cortex. It is found in the cytoskeleton. Its function is as follows. Adapter protein involved in asymmetrical cell division and cell polarization processes. Seems to play a central role in the formation of epithelial tight junctions. Targets the phosphatase PTEN to cell junctions. Involved in Schwann cell peripheral myelination. Association with PARD6B may prevent the interaction of PARD3 with F11R/JAM1, thereby preventing tight junction assembly. The PARD6-PARD3 complex links GTP-bound Rho small GTPases to atypical protein kinase C proteins. Required for establishment of neuronal polarity and normal axon formation in cultured hippocampal neurons. In Homo sapiens (Human), this protein is Partitioning defective 3 homolog.